Here is a 208-residue protein sequence, read N- to C-terminus: Large ribosomal subunit protein uL4 (208 aa).

The interval 46–97 (QGTHKTKTRAEVRGGGKKPYRQKGTGNARQGSSRSPIMVGGGTIFGPQPRSY) is disordered. The span at 69 to 80 (GTGNARQGSSRS) shows a compositional bias: polar residues.

The protein belongs to the universal ribosomal protein uL4 family. As to quaternary structure, part of the 50S ribosomal subunit.

Functionally, one of the primary rRNA binding proteins, this protein initially binds near the 5'-end of the 23S rRNA. It is important during the early stages of 50S assembly. It makes multiple contacts with different domains of the 23S rRNA in the assembled 50S subunit and ribosome. Its function is as follows. Forms part of the polypeptide exit tunnel. In Chlorobaculum parvum (strain DSM 263 / NCIMB 8327) (Chlorobium vibrioforme subsp. thiosulfatophilum), this protein is Large ribosomal subunit protein uL4.